The chain runs to 388 residues: Chorismate synthase (388 aa).

2 residues coordinate NADP(+): R39 and R45. FMN is bound by residues 132-134 (RSS), 251-252 (NA), G296, 311-315 (KPIPT), and R337.

It belongs to the chorismate synthase family. As to quaternary structure, homotetramer. FMNH2 is required as a cofactor.

The enzyme catalyses 5-O-(1-carboxyvinyl)-3-phosphoshikimate = chorismate + phosphate. It participates in metabolic intermediate biosynthesis; chorismate biosynthesis; chorismate from D-erythrose 4-phosphate and phosphoenolpyruvate: step 7/7. Its function is as follows. Catalyzes the anti-1,4-elimination of the C-3 phosphate and the C-6 proR hydrogen from 5-enolpyruvylshikimate-3-phosphate (EPSP) to yield chorismate, which is the branch point compound that serves as the starting substrate for the three terminal pathways of aromatic amino acid biosynthesis. This reaction introduces a second double bond into the aromatic ring system. The chain is Chorismate synthase from Staphylococcus aureus (strain MRSA252).